The following is a 343-amino-acid chain: L-threonine 3-dehydrogenase (343 aa).

Residue Cys38 participates in Zn(2+) binding. Residues Thr40 and His43 each act as charge relay system in the active site. Zn(2+) contacts are provided by His63, Glu64, Cys93, Cys96, Cys99, and Cys107. NAD(+) is bound by residues Ile175, Asp195, Arg200, 262-264 (LGI), and 286-287 (IY).

The protein belongs to the zinc-containing alcohol dehydrogenase family. In terms of assembly, homotetramer. Zn(2+) is required as a cofactor.

It localises to the cytoplasm. It carries out the reaction L-threonine + NAD(+) = (2S)-2-amino-3-oxobutanoate + NADH + H(+). It functions in the pathway amino-acid degradation; L-threonine degradation via oxydo-reductase pathway; glycine from L-threonine: step 1/2. Its function is as follows. Catalyzes the NAD(+)-dependent oxidation of L-threonine to 2-amino-3-ketobutyrate. The polypeptide is L-threonine 3-dehydrogenase (Burkholderia mallei (strain NCTC 10247)).